A 134-amino-acid chain; its full sequence is Transmembrane protein 100 (134 aa).

The interval M1–K23 is disordered. S15 is subject to Phosphoserine. 2 helical membrane-spanning segments follow: residues C56–Y76 and I84–A104. S121 is modified (phosphoserine).

As to quaternary structure, interacts (via C-terminus) with TRPA1 and TRPV1. Interacts with TASOR. Expressed in dorsal root ganglia. Expressed in neurons as well as nerve fiber bundles connecting ganglia and fibers innervating muscle layer of the gastric body, jejunum, and proximal colon. Expressed in arterial endothelial cells and neurons of the central nervous system and peripheral nervous system (at protein level). Expressed strongly in lung, weakly in brain, heart and muscle. Expressed in enteric neurons and vascular tissue in the muscularis propria of the gastrointestinal tract.

Its subcellular location is the cell membrane. It localises to the membrane. The protein localises to the perikaryon. The protein resides in the cytoplasm. It is found in the perinuclear region. Its subcellular location is the endoplasmic reticulum. In terms of biological role, plays a role during embryonic arterial endothelium differentiation and vascular morphogenesis through the ACVRL1 receptor-dependent signaling pathway upon stimulation by bone morphogenetic proteins, such as GDF2/BMP9 and BMP10. Involved in the regulation of nociception, acting as a modulator of the interaction between TRPA1 and TRPV1, two molecular sensors and mediators of pain signals in dorsal root ganglia (DRG) neurons. Mechanistically, it weakens their interaction, thereby releasing the inhibition of TRPA1 by TRPV1 and increasing the single-channel open probability of the TRPA1-TRPV1 complex. The polypeptide is Transmembrane protein 100 (Tmem100) (Mus musculus (Mouse)).